Here is a 66-residue protein sequence, read N- to C-terminus: Nigrocin-2ISb (66 aa).

A signal peptide spans 1 to 22; the sequence is MFTLKKSMLLLFFLGTINLSLC. The propeptide at 23-43 is removed in mature form; that stretch reads QEERDAEEERRDEDNAKMEEI. A disulfide bond links cysteine 60 and cysteine 66.

As to expression, expressed by the skin glands.

It is found in the secreted. In terms of biological role, has antimicrobial activity against Gram-negative bacterium E.coli ATCC 8739 (MIC=50 ug), against Gram positive bacteria S.aureus ATCC 6538 (MIC=3.1 ug), methicillin-resistant S.aureus ATCC 43300 (MIC=12.5 ug), B.subtilis ATCC 6633 (MIC=12.5 ug) and against fungus C.albicans ATCC 90028 (MIC=50 ug). The protein is Nigrocin-2ISb of Odorrana ishikawae (Ishikawa's frog).